Here is a 187-residue protein sequence, read N- to C-terminus: Ribosome maturation factor RimM (187 aa).

Residues 96 to 169 (EDEFFYADLE…KLVIDPTAAG (74 aa)) form the PRC barrel domain.

The protein belongs to the RimM family. Binds ribosomal protein uS19.

It is found in the cytoplasm. In terms of biological role, an accessory protein needed during the final step in the assembly of 30S ribosomal subunit, possibly for assembly of the head region. Essential for efficient processing of 16S rRNA. May be needed both before and after RbfA during the maturation of 16S rRNA. It has affinity for free ribosomal 30S subunits but not for 70S ribosomes. The polypeptide is Ribosome maturation factor RimM (Sinorhizobium medicae (strain WSM419) (Ensifer medicae)).